Reading from the N-terminus, the 480-residue chain is Ribulose bisphosphate carboxylase large chain (480 aa).

Positions 1 to 2 (MS) are excised as a propeptide. N-acetylproline is present on proline 3. The residue at position 14 (lysine 14) is an N6,N6,N6-trimethyllysine. Positions 123 and 173 each coordinate substrate. Lysine 175 (proton acceptor) is an active-site residue. Lysine 177 is a substrate binding site. Lysine 201, aspartate 203, and glutamate 204 together coordinate Mg(2+). Lysine 201 is modified (N6-carboxylysine). Histidine 294 (proton acceptor) is an active-site residue. 3 residues coordinate substrate: arginine 295, histidine 327, and serine 379.

The protein belongs to the RuBisCO large chain family. Type I subfamily. Heterohexadecamer of 8 large chains and 8 small chains; disulfide-linked. The disulfide link is formed within the large subunit homodimers. Requires Mg(2+) as cofactor. Post-translationally, the disulfide bond which can form in the large chain dimeric partners within the hexadecamer appears to be associated with oxidative stress and protein turnover.

It is found in the plastid. The protein resides in the chloroplast. The enzyme catalyses 2 (2R)-3-phosphoglycerate + 2 H(+) = D-ribulose 1,5-bisphosphate + CO2 + H2O. It catalyses the reaction D-ribulose 1,5-bisphosphate + O2 = 2-phosphoglycolate + (2R)-3-phosphoglycerate + 2 H(+). Functionally, ruBisCO catalyzes two reactions: the carboxylation of D-ribulose 1,5-bisphosphate, the primary event in carbon dioxide fixation, as well as the oxidative fragmentation of the pentose substrate in the photorespiration process. Both reactions occur simultaneously and in competition at the same active site. This chain is Ribulose bisphosphate carboxylase large chain, found in Gossypium barbadense (Sea Island cotton).